The chain runs to 89 residues: Small ribosomal subunit protein uS15 (89 aa).

Belongs to the universal ribosomal protein uS15 family. As to quaternary structure, part of the 30S ribosomal subunit. Forms a bridge to the 50S subunit in the 70S ribosome, contacting the 23S rRNA.

In terms of biological role, one of the primary rRNA binding proteins, it binds directly to 16S rRNA where it helps nucleate assembly of the platform of the 30S subunit by binding and bridging several RNA helices of the 16S rRNA. Its function is as follows. Forms an intersubunit bridge (bridge B4) with the 23S rRNA of the 50S subunit in the ribosome. The protein is Small ribosomal subunit protein uS15 of Shewanella woodyi (strain ATCC 51908 / MS32).